Reading from the N-terminus, the 122-residue chain is Prefoldin subunit 1 (122 aa).

Ala2 is subject to N-acetylalanine.

The protein belongs to the prefoldin subunit beta family. In terms of assembly, heterohexamer of two PFD-alpha type and four PFD-beta type subunits.

In terms of biological role, binds specifically to cytosolic chaperonin (c-CPN) and transfers target proteins to it. Binds to nascent polypeptide chain and promotes folding in an environment in which there are many competing pathways for nonnative proteins. The chain is Prefoldin subunit 1 (Pfdn1) from Mus musculus (Mouse).